The primary structure comprises 248 residues: Probable transcriptional regulatory protein FTN_1028 (248 aa).

It belongs to the TACO1 family.

It is found in the cytoplasm. In Francisella tularensis subsp. novicida (strain U112), this protein is Probable transcriptional regulatory protein FTN_1028.